Reading from the N-terminus, the 591-residue chain is Aspartate--tRNA(Asp/Asn) ligase (591 aa).

Glu-174 contacts L-aspartate. An aspartate region spans residues 198–201 (QLFK). Arg-220 lines the L-aspartate pocket. ATP is bound by residues 220 to 222 (RDE) and Gln-229. His-450 lines the L-aspartate pocket. Glu-483 lines the ATP pocket. Arg-490 serves as a coordination point for L-aspartate. 535–538 (GLDR) serves as a coordination point for ATP.

Belongs to the class-II aminoacyl-tRNA synthetase family. Type 1 subfamily. Homodimer.

The protein localises to the cytoplasm. It carries out the reaction tRNA(Asx) + L-aspartate + ATP = L-aspartyl-tRNA(Asx) + AMP + diphosphate. Functionally, aspartyl-tRNA synthetase with relaxed tRNA specificity since it is able to aspartylate not only its cognate tRNA(Asp) but also tRNA(Asn). Reaction proceeds in two steps: L-aspartate is first activated by ATP to form Asp-AMP and then transferred to the acceptor end of tRNA(Asp/Asn). This Pseudomonas aeruginosa (strain LESB58) protein is Aspartate--tRNA(Asp/Asn) ligase.